A 555-amino-acid polypeptide reads, in one-letter code: Glucosylglycerate phosphorylase (555 aa).

The active-site Nucleophile is D231.

The protein belongs to the glycosyl hydrolase 13 family. Glucosylglycerate phosphorylase subfamily.

The catalysed reaction is (2R)-2-O-(alpha-D-glucopyranosyl)-glycerate + phosphate = (R)-glycerate + alpha-D-glucose 1-phosphate. Its function is as follows. Catalyzes the reversible phosphorolysis of glucosylglycerate into alpha-D-glucose 1-phosphate (Glc1P) and D-glycerate. May be a regulator of intracellular levels of glucosylglycerate, a compatible solute that primarily protects organisms facing salt stress and very specific nutritional constraints. Has a very strict substrate specificity. Cannot catalyze the phosphorolysis of sucrose or synthesize sucrose from Glc1P and D-fructose. The polypeptide is Glucosylglycerate phosphorylase (Allomeiothermus silvanus (strain ATCC 700542 / DSM 9946 / NBRC 106475 / NCIMB 13440 / VI-R2) (Thermus silvanus)).